A 488-amino-acid chain; its full sequence is Cobyric acid synthase (488 aa).

Residues valine 248–alanine 435 form the GATase cobBQ-type domain. The active-site Nucleophile is the cysteine 329. Histidine 427 is a catalytic residue.

Belongs to the CobB/CobQ family. CobQ subfamily.

The protein operates within cofactor biosynthesis; adenosylcobalamin biosynthesis. Functionally, catalyzes amidations at positions B, D, E, and G on adenosylcobyrinic A,C-diamide. NH(2) groups are provided by glutamine, and one molecule of ATP is hydrogenolyzed for each amidation. The chain is Cobyric acid synthase from Pseudomonas fluorescens (strain Pf0-1).